A 274-amino-acid chain; its full sequence is Large ribosomal subunit protein uL2c (274 aa).

Residues 224–274 (NPVDHPHGGGEGRAPIGRKKPTTPWGYPALGRKSRKRNKYSEKFILRHRSK) are disordered.

Belongs to the universal ribosomal protein uL2 family. As to quaternary structure, part of the 50S ribosomal subunit.

It is found in the plastid. It localises to the chloroplast. This Ipomoea purpurea (Common morning glory) protein is Large ribosomal subunit protein uL2c (rpl2).